Reading from the N-terminus, the 353-residue chain is Putative glycosyltransferase TagX (353 aa).

It belongs to the glycosyltransferase 2 family.

This chain is Putative glycosyltransferase TagX (tagX), found in Staphylococcus aureus (strain MSSA476).